The following is a 1298-amino-acid chain: Phosphoribosylformylglycinamidine synthase (1298 aa).

Residues 303 to 327 form a disordered region; the sequence is FPGAATGSGGEIRDEGATGRGAKPK. ATP contacts are provided by residues 305–316, 384–386, and Ala676; these read GAATGSGGEIRD and TGY. 4 residues coordinate Mg(2+): Asp677, Glu716, Asn720, and Asp884. Residue Ser886 coordinates ATP. Residues 1045-1298 form the Glutamine amidotransferase type-1 domain; that stretch reads VAVLREQGVN…MFRNARAWVN (254 aa). The Nucleophile role is filled by Cys1138. Catalysis depends on residues His1263 and Glu1265.

This sequence in the N-terminal section; belongs to the FGAMS family. Monomer.

It is found in the cytoplasm. The enzyme catalyses N(2)-formyl-N(1)-(5-phospho-beta-D-ribosyl)glycinamide + L-glutamine + ATP + H2O = 2-formamido-N(1)-(5-O-phospho-beta-D-ribosyl)acetamidine + L-glutamate + ADP + phosphate + H(+). It functions in the pathway purine metabolism; IMP biosynthesis via de novo pathway; 5-amino-1-(5-phospho-D-ribosyl)imidazole from N(2)-formyl-N(1)-(5-phospho-D-ribosyl)glycinamide: step 1/2. Its function is as follows. Phosphoribosylformylglycinamidine synthase involved in the purines biosynthetic pathway. Catalyzes the ATP-dependent conversion of formylglycinamide ribonucleotide (FGAR) and glutamine to yield formylglycinamidine ribonucleotide (FGAM) and glutamate. This Pseudomonas syringae pv. syringae (strain B728a) protein is Phosphoribosylformylglycinamidine synthase.